The sequence spans 95 residues: Large ribosomal subunit protein bL25 (95 aa).

The protein belongs to the bacterial ribosomal protein bL25 family. Part of the 50S ribosomal subunit; part of the 5S rRNA/L5/L18/L25 subcomplex. Contacts the 5S rRNA. Binds to the 5S rRNA independently of L5 and L18.

Its function is as follows. This is one of the proteins that binds to the 5S RNA in the ribosome where it forms part of the central protuberance. The polypeptide is Large ribosomal subunit protein bL25 (Shewanella baltica (strain OS223)).